A 316-amino-acid chain; its full sequence is Mannose-6-phosphate isomerase (316 aa).

Positions 95, 97, 114, and 171 each coordinate Zn(2+). R191 is a catalytic residue.

It belongs to the mannose-6-phosphate isomerase type 1 family. Requires Zn(2+) as cofactor.

The catalysed reaction is D-mannose 6-phosphate = D-fructose 6-phosphate. In Streptococcus mutans serotype c (strain ATCC 700610 / UA159), this protein is Mannose-6-phosphate isomerase (pmi).